The following is a 953-amino-acid chain: Coatomer subunit beta (953 aa).

7 HEAT repeats span residues 17-54 (DSEP…NGEK), 96-131 (QEMI…KEAE), 132-168 (LLEP…NFEH), 240-276 (SERA…SAPT), 277-314 (AIKA…HPSH), 316-353 (RVLQ…SRNV), and 396-433 (DMAA…RFDN).

Oligomeric complex that consists of at least the alpha, beta, beta', gamma, delta, epsilon and zeta subunits.

The protein resides in the cytoplasm. Its subcellular location is the golgi apparatus membrane. The protein localises to the cytoplasmic vesicle. It localises to the COPI-coated vesicle membrane. Its function is as follows. The coatomer is a cytosolic protein complex that binds to dilysine motifs and reversibly associates with Golgi non-clathrin-coated vesicles, which further mediate biosynthetic protein transport from the ER, via the Golgi up to the trans Golgi network. Coatomer complex is required for budding from Golgi membranes, and is essential for the retrograde Golgi-to-ER transport of dilysine-tagged proteins. This chain is Coatomer subunit beta (COPB1), found in Gallus gallus (Chicken).